A 718-amino-acid chain; its full sequence is Catalase-peroxidase 1 (718 aa).

Residues 93-221 (WHSAGTYRIA…LAAVMMGLIY (129 aa)) constitute a cross-link (tryptophyl-tyrosyl-methioninium (Trp-Tyr) (with M-247)). Catalysis depends on His94, which acts as the Proton acceptor. Positions 221 to 247 (YVNPEGVDGNPDPLKTAQDMRVTFARM) form a cross-link, tryptophyl-tyrosyl-methioninium (Tyr-Met) (with W-93). His262 is a binding site for heme b.

This sequence belongs to the peroxidase family. Peroxidase/catalase subfamily. In terms of assembly, homodimer or homotetramer. It depends on heme b as a cofactor. Formation of the three residue Trp-Tyr-Met cross-link is important for the catalase, but not the peroxidase activity of the enzyme.

The enzyme catalyses H2O2 + AH2 = A + 2 H2O. The catalysed reaction is 2 H2O2 = O2 + 2 H2O. In terms of biological role, bifunctional enzyme with both catalase and broad-spectrum peroxidase activity. The sequence is that of Catalase-peroxidase 1 from Shewanella amazonensis (strain ATCC BAA-1098 / SB2B).